The sequence spans 58 residues: Small ribosomal subunit protein bS21 (58 aa).

The span at 32–42 (IRKREHYEKPS) shows a compositional bias: basic and acidic residues. Residues 32-58 (IRKREHYEKPSVRRKKKSEAARKRKFN) form a disordered region. Residues 43-58 (VRRKKKSEAARKRKFN) are compositionally biased toward basic residues.

This sequence belongs to the bacterial ribosomal protein bS21 family.

The chain is Small ribosomal subunit protein bS21 from Lachnospira eligens (strain ATCC 27750 / DSM 3376 / VPI C15-48 / C15-B4) (Eubacterium eligens).